The following is an 810-amino-acid chain: RING finger protein unkempt homolog (810 aa).

The segment at 1 to 24 (MSKGPGPGGSAASSAPPAATAQVL) is disordered. The segment covering 10 to 19 (SAASSAPPAA) has biased composition (low complexity). 5 consecutive C3H1-type zinc fingers follow at residues 84–113 (YSPD…HRTT), 124–154 (YYKT…HGPH), 215–241 (NYKT…HNSK), 251–285 (KYRS…HTRT), and 293–321 (IYKS…HVEQ). The tract at residues 239-265 (NSKDRRRSPRKHKYRSSPCPNVKHGDE) is disordered. Phosphoserine is present on S240. Basic residues predominate over residues 241 to 253 (KDRRRSPRKHKYR). The disordered stretch occupies residues 324–343 (LSDDLQPSSAVSSPTQPGPV). Over residues 328-338 (LQPSSAVSSPT) the composition is skewed to polar residues. S374, S378, S385, and S631 each carry phosphoserine. A coiled-coil region spans residues 643–723 (GAAELARLRQ…QEELERLHAG (81 aa)). The RING-type; degenerate zinc-finger motif lies at 766–801 (SVKCLKCQEQKRAVLPCQHAALCELCAEGSECPICQ).

This sequence belongs to the unkempt family.

Its subcellular location is the cytoplasm. Its function is as follows. Sequence-specific RNA-binding protein which plays an important role in the establishment and maintenance of the early morphology of cortical neurons during embryonic development. Acts as a translation repressor and controls a translationally regulated cell morphology program to ensure proper structuring of the nervous system. Translational control depends on recognition of its binding element within target mRNAs which consists of a mandatory UAG trimer upstream of a U/A-rich motif. Associated with polysomes. In Homo sapiens (Human), this protein is RING finger protein unkempt homolog (UNK).